An 83-amino-acid chain; its full sequence is Small ribosomal subunit protein bS16 (83 aa).

This sequence belongs to the bacterial ribosomal protein bS16 family.

In Azotobacter vinelandii (strain DJ / ATCC BAA-1303), this protein is Small ribosomal subunit protein bS16.